Here is a 173-residue protein sequence, read N- to C-terminus: Crossover junction endodeoxyribonuclease RuvC (173 aa).

Active-site residues include Asp-8, Glu-69, and Asp-141. Residues Asp-8, Glu-69, and Asp-141 each coordinate Mg(2+).

This sequence belongs to the RuvC family. As to quaternary structure, homodimer which binds Holliday junction (HJ) DNA. The HJ becomes 2-fold symmetrical on binding to RuvC with unstacked arms; it has a different conformation from HJ DNA in complex with RuvA. In the full resolvosome a probable DNA-RuvA(4)-RuvB(12)-RuvC(2) complex forms which resolves the HJ. The cofactor is Mg(2+).

The protein localises to the cytoplasm. The catalysed reaction is Endonucleolytic cleavage at a junction such as a reciprocal single-stranded crossover between two homologous DNA duplexes (Holliday junction).. Its function is as follows. The RuvA-RuvB-RuvC complex processes Holliday junction (HJ) DNA during genetic recombination and DNA repair. Endonuclease that resolves HJ intermediates. Cleaves cruciform DNA by making single-stranded nicks across the HJ at symmetrical positions within the homologous arms, yielding a 5'-phosphate and a 3'-hydroxyl group; requires a central core of homology in the junction. The consensus cleavage sequence is 5'-(A/T)TT(C/G)-3'. Cleavage occurs on the 3'-side of the TT dinucleotide at the point of strand exchange. HJ branch migration catalyzed by RuvA-RuvB allows RuvC to scan DNA until it finds its consensus sequence, where it cleaves and resolves the cruciform DNA. The chain is Crossover junction endodeoxyribonuclease RuvC from Xylella fastidiosa (strain Temecula1 / ATCC 700964).